The following is a 141-amino-acid chain: Large ribosomal subunit protein uL11c (141 aa).

It belongs to the universal ribosomal protein uL11 family. Part of the ribosomal stalk of the 50S ribosomal subunit. Interacts with L10 and the large rRNA to form the base of the stalk. L10 forms an elongated spine to which L12 dimers bind in a sequential fashion forming a multimeric L10(L12)X complex.

It is found in the plastid. Its subcellular location is the chloroplast. Forms part of the ribosomal stalk which helps the ribosome interact with GTP-bound translation factors. This is Large ribosomal subunit protein uL11c from Cyanidium caldarium (Red alga).